Here is a 130-residue protein sequence, read N- to C-terminus: Small ribosomal subunit protein uS11 (130 aa).

Belongs to the universal ribosomal protein uS11 family. In terms of assembly, part of the 30S ribosomal subunit. Interacts with proteins S7 and S18. Binds to IF-3.

Functionally, located on the platform of the 30S subunit, it bridges several disparate RNA helices of the 16S rRNA. Forms part of the Shine-Dalgarno cleft in the 70S ribosome. This chain is Small ribosomal subunit protein uS11, found in Campylobacter jejuni subsp. jejuni serotype O:6 (strain 81116 / NCTC 11828).